We begin with the raw amino-acid sequence, 248 residues long: Triosephosphate isomerase A (248 aa).

Substrate-binding residues include N11 and K13. H95 functions as the Electrophile in the catalytic mechanism. The active-site Proton acceptor is E165.

The protein belongs to the triosephosphate isomerase family. In terms of assembly, homodimer.

The protein localises to the cytoplasm. It catalyses the reaction dihydroxyacetone phosphate = methylglyoxal + phosphate. The enzyme catalyses D-glyceraldehyde 3-phosphate = dihydroxyacetone phosphate. It functions in the pathway carbohydrate degradation; glycolysis; D-glyceraldehyde 3-phosphate from glycerone phosphate: step 1/1. It participates in carbohydrate biosynthesis; gluconeogenesis. In terms of biological role, triosephosphate isomerase is an extremely efficient metabolic enzyme that catalyzes the interconversion between dihydroxyacetone phosphate (DHAP) and D-glyceraldehyde-3-phosphate (G3P) in glycolysis and gluconeogenesis. Its function is as follows. It is also responsible for the non-negligible production of methylglyoxal a reactive cytotoxic side-product that modifies and can alter proteins, DNA and lipids. This chain is Triosephosphate isomerase A (tpi1a), found in Danio rerio (Zebrafish).